Consider the following 1157-residue polypeptide: Endo-1,4-beta-xylanase A (1157 aa).

An N-terminal signal peptide occupies residues 1–33 (MMKNNVDRIVSIVTALIMIFGASLFSPPIRVFA). 2 consecutive CBM-cenC domains span residues 38–189 (INLV…VTTQ) and 195–343 (GNVI…VIGE). A GH10 domain is found at 352-675 (QNDIPDLYSV…KPAFWAVVDP (324 aa)). Residue Glu-495 is the Proton donor of the active site. The active site involves Asp-537. The active-site Nucleophile is the Glu-600. 2 SLH domains span residues 1051–1114 (KKGV…YSGE) and 1115–1157 (FSDV…EMTQ).

Belongs to the glycosyl hydrolase 10 (cellulase F) family.

It carries out the reaction Endohydrolysis of (1-&gt;4)-beta-D-xylosidic linkages in xylans.. Its pathway is glycan degradation; xylan degradation. In terms of biological role, endo-acting enzyme that randomly cleaves the internal xylosidic linkages of the xylan backbone, yielding xylooligosaccharides of various lengths which are further hydrolyzed to xylose molecules by beta-xylosidase (EC 3.2.1.37). Requires at least three xylose residues for catalytic activity. Does not have activity against xylobiose. In Thermoanaerobacterium saccharolyticum, this protein is Endo-1,4-beta-xylanase A (xynA).